The chain runs to 376 residues: Alanine racemase (376 aa).

Residue Lys-40 is the Proton acceptor; specific for D-alanine of the active site. Lys-40 is subject to N6-(pyridoxal phosphate)lysine. Arg-138 contacts substrate. The Proton acceptor; specific for L-alanine role is filled by Tyr-270. Met-317 contacts substrate.

Belongs to the alanine racemase family. Requires pyridoxal 5'-phosphate as cofactor.

The catalysed reaction is L-alanine = D-alanine. Its pathway is amino-acid biosynthesis; D-alanine biosynthesis; D-alanine from L-alanine: step 1/1. Catalyzes the interconversion of L-alanine and D-alanine. May also act on other amino acids. In Lactobacillus delbrueckii subsp. bulgaricus (strain ATCC BAA-365 / Lb-18), this protein is Alanine racemase (alr).